Here is a 214-residue protein sequence, read N- to C-terminus: Adenylate kinase (214 aa).

An ATP-binding site is contributed by 10–15 (GAGKGT). Residues 30–59 (ATGDVLRAAVKEGTPLGLEAKAAMDRGDLV) form an NMP region. AMP-binding positions include threonine 31, arginine 36, 57 to 59 (DLV), and glutamine 92. An LID region spans residues 126 to 161 (GRTTCEACQRPFFGRQPGETCTEGGVSGTLVRRKDD). Arginine 127 is an ATP binding site. 2 residues coordinate AMP: arginine 158 and arginine 169. Position 198 (glycine 198) interacts with ATP.

This sequence belongs to the adenylate kinase family. Monomer.

Its subcellular location is the cytoplasm. It catalyses the reaction AMP + ATP = 2 ADP. It participates in purine metabolism; AMP biosynthesis via salvage pathway; AMP from ADP: step 1/1. Functionally, catalyzes the reversible transfer of the terminal phosphate group between ATP and AMP. Plays an important role in cellular energy homeostasis and in adenine nucleotide metabolism. In Gemmatimonas aurantiaca (strain DSM 14586 / JCM 11422 / NBRC 100505 / T-27), this protein is Adenylate kinase.